Reading from the N-terminus, the 526-residue chain is Delayed-rectifier potassium channel regulatory subunit KCNS1 (526 aa).

At 1 to 217 (MLMLLVRGTH…LTMENPGYSL (217 aa)) the chain is on the cytoplasmic side. A helical membrane pass occupies residues 218–239 (PSKLFSCVSISVVLASIAAMCI). Topologically, residues 240 to 270 (HSLPEYQAREAAAAVAAVAAGRSPEGVRDDP) are extracellular. Residues 271 to 293 (VLRRLEYFCIAWFSFEVSSRLLL) form a helical membrane-spanning segment. Residues 294 to 304 (APSTRNFFCHP) lie on the Cytoplasmic side of the membrane. Residues 305–322 (LNLIDIVSVLPFYLTLLA) form a helical membrane-spanning segment. Residues 323 to 337 (GVALGDQGGKEFGHL) are Extracellular-facing. The chain crosses the membrane as a helical; Voltage-sensor span at residues 338–358 (GKVVQVFRLMRIFRVLKLARH). The Cytoplasmic portion of the chain corresponds to 359–373 (STGLRSLGATLKHSY). Residues 374–395 (REVGILLLYLAVGVSVFSGVAY) traverse the membrane as a helical segment. The Extracellular portion of the chain corresponds to 396 to 408 (TAEKEEDVGFNTI). The helical intramembrane region spans 409 to 420 (PACWWWGTVSMT). The short motif at 421-426 (TVGYGD) is the Selectivity filter element. The stretch at 421 to 428 (TVGYGDVV) is an intramembrane region. Residues 429-435 (PVTVAGK) lie on the Extracellular side of the membrane. The helical transmembrane segment at 436–464 (LAASGCILGGILVVALPITIIFNKFSHFY) threads the bilayer. Over 465–526 (RRQKALEAAV…PSEPPHPQMY (62 aa)) the chain is Cytoplasmic. The disordered stretch occupies residues 491-526 (GVSEASLETSRETSQEGRSADLESQAPSEPPHPQMY). Residues 499-511 (TSRETSQEGRSAD) are compositionally biased toward basic and acidic residues.

Belongs to the potassium channel family. S (TC 1.A.1.2) subfamily. Kv9.1/KCNS1 sub-subfamily. In terms of assembly, heterotetramer with KCNB1. Heterotetramer with KCNB2. Does not form homomultimers.

Its subcellular location is the cell membrane. Functionally, potassium channel regulatory subunit that modulate the delayed rectifier voltage-gated potassium channel activity of KCNB1 and KCNB2 by altering their kinetics, expression levels, and shifting the half-inactivation potential to more polarized values. While it does not form functional channels on its own, it can form functional heterotetrameric channels with KCNB1 and KCNB2. Each regulatory subunit has unique regulatory properties that can lead to extensive inhibition, significant changes in kinetics, and/or substantial shifts in the voltage dependencies of the inactivation process. The chain is Delayed-rectifier potassium channel regulatory subunit KCNS1 from Pongo abelii (Sumatran orangutan).